A 253-amino-acid chain; its full sequence is Chromosome-partitioning ATPase Soj (253 aa).

10 residues coordinate ATP: Lys11, Gly12, Gly13, Val14, Gly15, Lys16, Thr17, Thr18, Pro211, and Asn213. Thr17 contributes to the Mg(2+) binding site.

This sequence belongs to the ParA family.

It catalyses the reaction ATP + H2O = ADP + phosphate + H(+). In terms of biological role, ATPase probably involved in chromosome partitioning. Cooperatively binds dsDNA, forming nucleoprotein filaments in a strictly ATP-dependent fashion. This chain is Chromosome-partitioning ATPase Soj, found in Treponema pallidum (strain Nichols).